The sequence spans 93 residues: Small ribosomal subunit protein uS19 (93 aa).

The protein belongs to the universal ribosomal protein uS19 family.

Its function is as follows. Protein S19 forms a complex with S13 that binds strongly to the 16S ribosomal RNA. In Caldanaerobacter subterraneus subsp. tengcongensis (strain DSM 15242 / JCM 11007 / NBRC 100824 / MB4) (Thermoanaerobacter tengcongensis), this protein is Small ribosomal subunit protein uS19.